The sequence spans 746 residues: 1,4-alpha-glucan branching enzyme GlgB (746 aa).

Asp418 functions as the Nucleophile in the catalytic mechanism. Glu471 (proton donor) is an active-site residue.

The protein belongs to the glycosyl hydrolase 13 family. GlgB subfamily. Monomer.

It catalyses the reaction Transfers a segment of a (1-&gt;4)-alpha-D-glucan chain to a primary hydroxy group in a similar glucan chain.. It functions in the pathway glycan biosynthesis; glycogen biosynthesis. In terms of biological role, catalyzes the formation of the alpha-1,6-glucosidic linkages in glycogen by scission of a 1,4-alpha-linked oligosaccharide from growing alpha-1,4-glucan chains and the subsequent attachment of the oligosaccharide to the alpha-1,6 position. The chain is 1,4-alpha-glucan branching enzyme GlgB from Nitrosospira multiformis (strain ATCC 25196 / NCIMB 11849 / C 71).